We begin with the raw amino-acid sequence, 686 residues long: Methionine--tRNA ligase (686 aa).

The 'HIGH' region signature appears at 13–23 (PYANGQIHIGH). 4 residues coordinate Zn(2+): C144, C147, C157, and C160. Positions 335–339 (KMSKS) match the 'KMSKS' region motif. K338 provides a ligand contact to ATP. The tRNA-binding domain occupies 580–686 (DFAKVDLRVA…EGAVPGMRIG (107 aa)).

It belongs to the class-I aminoacyl-tRNA synthetase family. MetG type 1 subfamily. As to quaternary structure, homodimer. Zn(2+) serves as cofactor.

Its subcellular location is the cytoplasm. It catalyses the reaction tRNA(Met) + L-methionine + ATP = L-methionyl-tRNA(Met) + AMP + diphosphate. Functionally, is required not only for elongation of protein synthesis but also for the initiation of all mRNA translation through initiator tRNA(fMet) aminoacylation. The chain is Methionine--tRNA ligase from Cupriavidus necator (strain ATCC 17699 / DSM 428 / KCTC 22496 / NCIMB 10442 / H16 / Stanier 337) (Ralstonia eutropha).